Here is a 175-residue protein sequence, read N- to C-terminus: UPF0398 protein SPD_0338 (175 aa).

It belongs to the UPF0398 family.

The polypeptide is UPF0398 protein SPD_0338 (Streptococcus pneumoniae serotype 2 (strain D39 / NCTC 7466)).